Here is a 67-residue protein sequence, read N- to C-terminus: Myrmicitoxin(1)-Pm6a (67 aa).

The signal sequence occupies residues 1 to 25 (MRSLYLSFSLTIIFVLVIMHAEAKA). The propeptide occupies 26–37 (ISEPNAIAEADP). V66 bears the Valine amide mark.

Belongs to the formicidae venom clade 3 family. In terms of tissue distribution, expressed by the venom gland.

The protein localises to the secreted. Toxin that causes a rapid and irreversible paralysis when intrathoracically injected into insects (blowflies). Does not cause spontaneous nocifensive behaviors by intraplantar injection in mice. Exhibits hemolytic and cytotoxic activities on HEK293 cells. The polypeptide is Myrmicitoxin(1)-Pm6a (Pogonomyrmex maricopa (Maricopa harvester ant)).